A 339-amino-acid polypeptide reads, in one-letter code: MKPYPIDLVSVVIPVYNEEASLPELLRRTEAACLELGRAFEIVLVDDGSRDRSAELLQAAAERDGSAVVAVILNRNYGQHAAILAGFEQSRGDLVITLDADLQNPPEEIPRLVERAAQGYDVVGSIRAERQDSAWRRWPSRLVNLAVQRSTGVAMHDYGCMLRAYRRSIVEAMLACRERSTFIPILANGFARHTCEIRVAHAERAHGESKYSAMRLLNLMFDLVTCMTTTPLRLLSLVGGGMALAGFLFALFLLVLRLAFGAAWAGNGLFVLFAVLFMFSGVQLLGMGLLGEYLGRMYSDVRARPRFFIERVVRATPSALPSALQRVGFTSSSSEPSTP.

Helical transmembrane passes span 235 to 255 (LSLV…FLLV) and 269 to 289 (LFVL…GMGL).

The protein belongs to the glycosyltransferase 2 family.

The protein localises to the cell inner membrane. It carries out the reaction UDP-4-deoxy-4-formamido-beta-L-arabinose + di-trans,octa-cis-undecaprenyl phosphate = 4-deoxy-4-formamido-alpha-L-arabinopyranosyl di-trans,octa-cis-undecaprenyl phosphate + UDP. It functions in the pathway glycolipid biosynthesis; 4-amino-4-deoxy-alpha-L-arabinose undecaprenyl phosphate biosynthesis; 4-amino-4-deoxy-alpha-L-arabinose undecaprenyl phosphate from UDP-4-deoxy-4-formamido-beta-L-arabinose and undecaprenyl phosphate: step 1/2. Its pathway is bacterial outer membrane biogenesis; lipopolysaccharide biosynthesis. Its function is as follows. Catalyzes the transfer of 4-deoxy-4-formamido-L-arabinose from UDP to undecaprenyl phosphate. The modified arabinose is attached to lipid A and is required for resistance to polymyxin and cationic antimicrobial peptides. This Pseudomonas aeruginosa (strain UCBPP-PA14) protein is Undecaprenyl-phosphate 4-deoxy-4-formamido-L-arabinose transferase.